The following is a 622-amino-acid chain: 1-deoxy-D-xylulose-5-phosphate synthase (622 aa).

Thiamine diphosphate contacts are provided by residues His74 and 115–117 (GHS). Asp146 serves as a coordination point for Mg(2+). Thiamine diphosphate is bound by residues 147 to 148 (GA), Asn175, Tyr286, and Glu366. Asn175 is a binding site for Mg(2+).

Belongs to the transketolase family. DXPS subfamily. Homodimer. Mg(2+) serves as cofactor. Thiamine diphosphate is required as a cofactor.

The enzyme catalyses D-glyceraldehyde 3-phosphate + pyruvate + H(+) = 1-deoxy-D-xylulose 5-phosphate + CO2. It functions in the pathway metabolic intermediate biosynthesis; 1-deoxy-D-xylulose 5-phosphate biosynthesis; 1-deoxy-D-xylulose 5-phosphate from D-glyceraldehyde 3-phosphate and pyruvate: step 1/1. Its function is as follows. Catalyzes the acyloin condensation reaction between C atoms 2 and 3 of pyruvate and glyceraldehyde 3-phosphate to yield 1-deoxy-D-xylulose-5-phosphate (DXP). The protein is 1-deoxy-D-xylulose-5-phosphate synthase of Carboxydothermus hydrogenoformans (strain ATCC BAA-161 / DSM 6008 / Z-2901).